The following is a 455-amino-acid chain: Bifunctional protein GlmU (455 aa).

The interval 1–226 is pyrophosphorylase; sequence MSLEIVILAA…PMEVQGANDR (226 aa). UDP-N-acetyl-alpha-D-glucosamine-binding positions include 8 to 11, Lys22, Gln73, 78 to 79, 99 to 101, Gly136, Glu151, Asn166, and Asn224; these read LAAG, GT, and YGD. Asp101 lines the Mg(2+) pocket. A Mg(2+)-binding site is contributed by Asn224. The linker stretch occupies residues 227 to 247; it reads KQLSELERHYQLRAGRRLMAQ. Positions 248-455 are N-acetyltransferase; it reads GVTLRDPARF…WKRPEKIKKN (208 aa). UDP-N-acetyl-alpha-D-glucosamine is bound by residues Arg330 and Lys348. His360 acts as the Proton acceptor in catalysis. Tyr363 and Asn374 together coordinate UDP-N-acetyl-alpha-D-glucosamine. Acetyl-CoA-binding positions include Ala377, 383-384, Ser402, Ala420, and Arg437; that span reads NY.

In the N-terminal section; belongs to the N-acetylglucosamine-1-phosphate uridyltransferase family. It in the C-terminal section; belongs to the transferase hexapeptide repeat family. Homotrimer. Mg(2+) is required as a cofactor.

It is found in the cytoplasm. The enzyme catalyses alpha-D-glucosamine 1-phosphate + acetyl-CoA = N-acetyl-alpha-D-glucosamine 1-phosphate + CoA + H(+). The catalysed reaction is N-acetyl-alpha-D-glucosamine 1-phosphate + UTP + H(+) = UDP-N-acetyl-alpha-D-glucosamine + diphosphate. Its pathway is nucleotide-sugar biosynthesis; UDP-N-acetyl-alpha-D-glucosamine biosynthesis; N-acetyl-alpha-D-glucosamine 1-phosphate from alpha-D-glucosamine 6-phosphate (route II): step 2/2. It participates in nucleotide-sugar biosynthesis; UDP-N-acetyl-alpha-D-glucosamine biosynthesis; UDP-N-acetyl-alpha-D-glucosamine from N-acetyl-alpha-D-glucosamine 1-phosphate: step 1/1. It functions in the pathway bacterial outer membrane biogenesis; LPS lipid A biosynthesis. Functionally, catalyzes the last two sequential reactions in the de novo biosynthetic pathway for UDP-N-acetylglucosamine (UDP-GlcNAc). The C-terminal domain catalyzes the transfer of acetyl group from acetyl coenzyme A to glucosamine-1-phosphate (GlcN-1-P) to produce N-acetylglucosamine-1-phosphate (GlcNAc-1-P), which is converted into UDP-GlcNAc by the transfer of uridine 5-monophosphate (from uridine 5-triphosphate), a reaction catalyzed by the N-terminal domain. The polypeptide is Bifunctional protein GlmU (Pseudomonas fluorescens (strain Pf0-1)).